Here is a 141-residue protein sequence, read N- to C-terminus: 3-hydroxyacyl-[acyl-carrier-protein] dehydratase FabZ (141 aa).

His-49 is a catalytic residue.

This sequence belongs to the thioester dehydratase family. FabZ subfamily.

The protein resides in the cytoplasm. The catalysed reaction is a (3R)-hydroxyacyl-[ACP] = a (2E)-enoyl-[ACP] + H2O. Functionally, involved in unsaturated fatty acids biosynthesis. Catalyzes the dehydration of short chain beta-hydroxyacyl-ACPs and long chain saturated and unsaturated beta-hydroxyacyl-ACPs. This chain is 3-hydroxyacyl-[acyl-carrier-protein] dehydratase FabZ (fabZ2), found in Enterococcus faecalis (strain ATCC 700802 / V583).